A 459-amino-acid chain; its full sequence is tRNA modification GTPase MnmE (459 aa).

Residues Arg23, Glu88, and Arg127 each coordinate (6S)-5-formyl-5,6,7,8-tetrahydrofolate. A TrmE-type G domain is found at 223–381 (GLNTVIIGKP…LKDTIENMFA (159 aa)). Asn233 is a K(+) binding site. Residues 233–238 (NVGKSS), 252–258 (TDIPGTT), and 277–280 (DTAG) each bind GTP. Residue Ser237 participates in Mg(2+) binding. Positions 252, 254, and 257 each coordinate K(+). A Mg(2+)-binding site is contributed by Thr258. Lys459 provides a ligand contact to (6S)-5-formyl-5,6,7,8-tetrahydrofolate.

It belongs to the TRAFAC class TrmE-Era-EngA-EngB-Septin-like GTPase superfamily. TrmE GTPase family. As to quaternary structure, homodimer. Heterotetramer of two MnmE and two MnmG subunits. K(+) is required as a cofactor.

It is found in the cytoplasm. Exhibits a very high intrinsic GTPase hydrolysis rate. Involved in the addition of a carboxymethylaminomethyl (cmnm) group at the wobble position (U34) of certain tRNAs, forming tRNA-cmnm(5)s(2)U34. This Clostridium acetobutylicum (strain ATCC 824 / DSM 792 / JCM 1419 / IAM 19013 / LMG 5710 / NBRC 13948 / NRRL B-527 / VKM B-1787 / 2291 / W) protein is tRNA modification GTPase MnmE.